The sequence spans 152 residues: Ribosome maturation factor RimP (152 aa).

The protein belongs to the RimP family.

It is found in the cytoplasm. Its function is as follows. Required for maturation of 30S ribosomal subunits. The sequence is that of Ribosome maturation factor RimP from Pectobacterium atrosepticum (strain SCRI 1043 / ATCC BAA-672) (Erwinia carotovora subsp. atroseptica).